Reading from the N-terminus, the 822-residue chain is Microcephalin (822 aa).

One can recognise a BRCT 1 domain in the interval 10-99 (AFLKDVVAYV…ALVDESLFPA (90 aa)). Disordered stretches follow at residues 182–203 (MKEKRENLSPTSSQMLEQSQQN), 219–243 (PLSSDESFASGSHSSFGDSCGDQER), and 266–295 (SSFYGSASPNHLRQPRPQKAPDSPSKESIN). 2 stretches are compositionally biased toward polar residues: residues 189–203 (LSPTSSQMLEQSQQN) and 219–235 (PLSSDESFASGSHSSFG). Phosphoserine occurs at positions 273, 290, and 327. Thr329 bears the Phosphothreonine mark. Disordered regions lie at residues 335–366 (EHQVRLGPKNSSAKRKRAADLGSSPKGKLKKR), 498–567 (NDSP…SPED), and 594–636 (TGYS…PTRT). Positions 522-541 (HPDTLSSSAHHITPLKGNST) are enriched in polar residues. Basic and acidic residues-rich tracts occupy residues 542 to 553 (ETRDPGDGKGSP) and 625 to 634 (KKSEKEEKPT). BRCT domains follow at residues 627 to 717 (SEKE…PFEL) and 738 to 820 (YQGT…NYQL).

In terms of assembly, interacts with CDC27 and maybe other components of the APC/C complex. Interacts with histone variant H2AX under DNA damage conditions. High levels of expression are found in the developing forebrain and, in particular, in the walls of the lateral ventricles.

The protein resides in the cytoplasm. The protein localises to the cytoskeleton. Its subcellular location is the microtubule organizing center. It localises to the centrosome. Functionally, implicated in chromosome condensation and DNA damage induced cellular responses. May play a role in neurogenesis and regulation of the size of the cerebral cortex. The polypeptide is Microcephalin (Mus musculus (Mouse)).